Reading from the N-terminus, the 183-residue chain is Large ribosomal subunit protein bL25 (183 aa).

It belongs to the bacterial ribosomal protein bL25 family. CTC subfamily. In terms of assembly, part of the 50S ribosomal subunit; part of the 5S rRNA/L5/L18/L25 subcomplex. Contacts the 5S rRNA. Binds to the 5S rRNA independently of L5 and L18.

Functionally, this is one of the proteins that binds to the 5S RNA in the ribosome where it forms part of the central protuberance. This chain is Large ribosomal subunit protein bL25, found in Desulfotalea psychrophila (strain LSv54 / DSM 12343).